The primary structure comprises 241 residues: Large ribosomal subunit protein uL1 (241 aa).

This sequence belongs to the universal ribosomal protein uL1 family. Part of the 50S ribosomal subunit.

In terms of biological role, binds directly to 23S rRNA. The L1 stalk is quite mobile in the ribosome, and is involved in E site tRNA release. Protein L1 is also a translational repressor protein, it controls the translation of the L11 operon by binding to its mRNA. The polypeptide is Large ribosomal subunit protein uL1 (Thermomicrobium roseum (strain ATCC 27502 / DSM 5159 / P-2)).